The primary structure comprises 194 residues: Small ribosomal subunit protein uS11m (194 aa).

This sequence belongs to the universal ribosomal protein uS11 family. Component of the mitochondrial small ribosomal subunit (mt-SSU). Mature mammalian 55S mitochondrial ribosomes consist of a small (28S) and a large (39S) subunit. The 28S small subunit contains a 12S ribosomal RNA (12S mt-rRNA) and 30 different proteins. The 39S large subunit contains a 16S rRNA (16S mt-rRNA), a copy of mitochondrial valine transfer RNA (mt-tRNA(Val)), which plays an integral structural role, and 52 different proteins.

It localises to the mitochondrion. The sequence is that of Small ribosomal subunit protein uS11m (MRPS11) from Homo sapiens (Human).